A 229-amino-acid chain; its full sequence is Large ribosomal subunit protein uL1 (229 aa).

The protein belongs to the universal ribosomal protein uL1 family. In terms of assembly, part of the 50S ribosomal subunit.

In terms of biological role, binds directly to 23S rRNA. The L1 stalk is quite mobile in the ribosome, and is involved in E site tRNA release. Its function is as follows. Protein L1 is also a translational repressor protein, it controls the translation of the L11 operon by binding to its mRNA. This chain is Large ribosomal subunit protein uL1, found in Staphylococcus aureus (strain MRSA252).